A 254-amino-acid polypeptide reads, in one-letter code: DNA repair protein RecO (254 aa).

This sequence belongs to the RecO family.

Its function is as follows. Involved in DNA repair and RecF pathway recombination. This Anaeromyxobacter sp. (strain K) protein is DNA repair protein RecO.